Consider the following 532-residue polypeptide: MSLDELPHKVSDERVNHDTVTSHESEIGSGSISTVSSTVSSVESEKAAYEFLAQTPIKSTDAHLVEFSEAMRTVAKALRRVAEGKAAAQAEAEEWRRKYELEMAHKQQRKIKGYGSCANNELEKLASQLTLETPASDQAGCCGNHGICSHEVLQDESPGPNPRSSHKLVSRKASFRLSWGCNGDKNGQHKHDFVSFEKGDITTAERSNKQILLKWESSPQTVLFITKPNSNSVHVLCAEMVRWLKEHKKINVVVEPRVSKELLTEDSYYNFIQTWDDDEEKKMLHTKVDLIVTLGGDGTVLWAASLFKGPVPPVVAFSLGSLGFMTPFPSEQYRDCLDNVLNGPFSITLRNRLQCHVIRDAAKDELETEEPILVLNEVTIDRGISSYLTYLECYCDSSFVTCVQGDGLIISTTSGSTAYSLAAGGSMVHPQVPGILFTPICPHSLSFRPLILPEYVTLRVQVPHNSRGQAWASFDGKDRKLLSPGDALICSISPWPVPTACLVDSTTDFLRSIHEGLHWNLRKSQSFDGPRD.

The segment covering 1–26 has biased composition (basic and acidic residues); that stretch reads MSLDELPHKVSDERVNHDTVTSHESE. The segment at 1-32 is disordered; sequence MSLDELPHKVSDERVNHDTVTSHESEIGSGSI.

This sequence belongs to the NAD kinase family.

The catalysed reaction is NAD(+) + ATP = ADP + NADP(+) + H(+). The sequence is that of Probable NAD kinase 1 from Oryza sativa subsp. japonica (Rice).